We begin with the raw amino-acid sequence, 204 residues long: Tumor protein D53 (204 aa).

The tract at residues methionine 1–leucine 31 is disordered. Positions valine 22–methionine 73 form a coiled coil. Phosphoserine occurs at positions 29, 86, 122, and 131. The residue at position 133 (arginine 133) is an Omega-N-methylarginine. Threonine 146 bears the Phosphothreonine mark. Residues serine 149 and serine 174 each carry the phosphoserine modification. The segment at lysine 164–cysteine 204 is disordered. Over residues leucine 179 to arginine 195 the composition is skewed to polar residues.

This sequence belongs to the TPD52 family. Forms a homodimer or heterodimer with other members of the family.

The sequence is that of Tumor protein D53 (Tpd52l1) from Mus musculus (Mouse).